The sequence spans 866 residues: Protein mono-ADP-ribosyltransferase PARP9 (866 aa).

Serine 42 bears the Phosphoserine mark. 2 Macro domains span residues 109 to 298 (QRVF…ESIL) and 313 to 492 (ASTM…TKRS). A PARP catalytic domain is found at 635–853 (TNQQEKLDKM…YSSGPGMVSS (219 aa)).

This sequence belongs to the ARTD/PARP family. As to quaternary structure, forms a stable complex with E3 ligase DTX3L; the interaction is required for PARP9 mediated ADP-ribosylation of ubiquitin. Interacts (via PARP catalytic domain) with DTX3L (via N-terminus). Forms a complex with STAT1 and DTX3L independently of IFNB1 or IFNG-mediated STAT1 'Tyr-701' phosphorylation. Forms a complex with STAT1, DTX3L and histone H2B H2BC9/H2BJ; the interaction is likely to induce H2BC9/H2BJ ubiquitination. Interacts (via N-terminus) with STAT1. Interacts with PARP14 in IFNG-stimulated macrophages; the interaction prevents PARP14-mediated STAT1 and STAT6 ADP-riboslylation. Interacts with PARP1 (when poly-ADP-ribosylated). In terms of processing, ADP-ribosylated by PARP14. Highly expressed in the thymus and intestine. Expressed in macrophages.

It localises to the cytoplasm. It is found in the cytosol. The protein localises to the nucleus. It catalyses the reaction [protein]-C-terminal glycine + NAD(+) = [protein]-C-terminal O-(ADP-D-ribosyl)-glycine + nicotinamide. Binding to poly(ADP-ribose) does not affect its activity. In terms of biological role, ADP-ribosyltransferase which, in association with E3 ligase DTX3L, plays a role in DNA damage repair and in immune responses including interferon-mediated antiviral defenses. Within the complex, enhances DTX3L E3 ligase activity which is further enhanced by PARP9 binding to poly(ADP-ribose). In addition, positively regulates DTXL3 protein levels. In association with DTX3L and in presence of E1 and E2 enzymes, mediates NAD(+)-dependent mono-ADP-ribosylation of ubiquitin which prevents ubiquitin conjugation to substrates such as histones. During DNA repair, PARP1 recruits PARP9/BAL1-DTX3L complex to DNA damage sites via PARP9 binding to ribosylated PARP1. Subsequent PARP1-dependent PARP9/BAL1-DTX3L-mediated ubiquitination promotes the rapid and specific recruitment of 53BP1/TP53BP1, UIMC1/RAP80, and BRCA1 to DNA damage sites. In response to DNA damage, PARP9-DTX3L complex is required for efficient non-homologous end joining (NHEJ) but the complex function is restrained by PARP9 activity. Dispensable for B-cell receptor (BCR) assembly through V(D)J recombination and class switch recombination (CSR). In macrophages, positively regulates pro-inflammatory cytokines production in response to IFNG stimulation by suppressing PARP14-mediated STAT1 ADP-ribosylation and thus promoting STAT1 phosphorylation. Also suppresses PARP14-mediated STAT6 ADP-ribosylation. The polypeptide is Protein mono-ADP-ribosyltransferase PARP9 (Parp9) (Mus musculus (Mouse)).